The following is a 695-amino-acid chain: G-patch and R3H domain-containing protein C30B4.02c (695 aa).

6 disordered regions span residues 168-200, 213-242, 257-317, 332-351, 388-448, and 475-517; these read SDKEISSTEESEQLCYKEQESEKELYSKDNDDS, DIANNNAAPPPPLAQAQEQLSTENEDEFDI, FADL…FDEG, GNTDSLAEDEDDILEEDEDE, DSED…VAAR, and DKSK…DSDN. Residues 182–198 show a composition bias toward basic and acidic residues; the sequence is CYKEQESEKELYSKDND. Composition is skewed to acidic residues over residues 262–286, 307–317, and 337–351; these read VLEEDDDDEDEDEELEGEKEEEEEE, EDSESLEFDEG, and LAEDEDDILEEDEDE. Over residues 421-434 the composition is skewed to basic residues; it reads KKDRKLPKKMRKAQ. Residues 525–587 form the R3H domain; it reads KIFINDVYQR…KRYTMLSKTH (63 aa). Residues 652–695 form the G-patch domain; that stretch reads KENPGRRLLEKLGWYAGKGLGHPENEGSKDSLRAIVKVSRSGLG.

The protein localises to the cytoplasm. The sequence is that of G-patch and R3H domain-containing protein C30B4.02c from Schizosaccharomyces pombe (strain 972 / ATCC 24843) (Fission yeast).